A 641-amino-acid chain; its full sequence is Chaperone protein DnaK (641 aa).

Thr199 carries the phosphothreonine; by autocatalysis modification. Over residues 603-613 the composition is skewed to polar residues; sequence YTQQGGTAGSE. The interval 603–641 is disordered; the sequence is YTQQGGTAGSETHSHEKAGGSGGDDVVDAEFEEVRDDKR. The segment covering 627–641 has biased composition (acidic residues); sequence DVVDAEFEEVRDDKR.

This sequence belongs to the heat shock protein 70 family.

Functionally, acts as a chaperone. This Methylococcus capsulatus (strain ATCC 33009 / NCIMB 11132 / Bath) protein is Chaperone protein DnaK.